We begin with the raw amino-acid sequence, 420 residues long: Probable glucuronosyltransferase Os04g0398600 (420 aa).

Residues 1–4 are Cytoplasmic-facing; sequence MGSR. Residues 5–25 form a helical; Signal-anchor for type II membrane protein membrane-spanning segment; that stretch reads TVGWWLLAAAVVLAAAAADSG. Residues 26–420 lie on the Lumenal side of the membrane; sequence EAERAAEQHS…AGPVGDLKAW (395 aa). 2 N-linked (GlcNAc...) asparagine glycosylation sites follow: Asn147 and Asn408.

The protein belongs to the glycosyltransferase 47 family.

Its subcellular location is the golgi apparatus membrane. Functionally, involved in the synthesis of glucuronoxylan hemicellulose in secondary cell walls. The chain is Probable glucuronosyltransferase Os04g0398600 from Oryza sativa subsp. japonica (Rice).